The sequence spans 347 residues: Ketol-acid reductoisomerase (NADP(+)) (347 aa).

One can recognise a KARI N-terminal Rossmann domain in the interval 1–185 (MKIYYDEDAN…GGTRAGVLET (185 aa)). Residues 24–27 (YGSQ), Arg47, Ser50, Ser52, and 82–85 (DEFQ) contribute to the NADP(+) site. Residue His107 is part of the active site. Gly133 provides a ligand contact to NADP(+). One can recognise a KARI C-terminal knotted domain in the interval 186-336 (SFKEETETDL…AELRSKMKFL (151 aa)). Residues Asp194, Glu198, Glu230, and Glu234 each contribute to the Mg(2+) site. A substrate-binding site is contributed by Ser255.

This sequence belongs to the ketol-acid reductoisomerase family. Mg(2+) is required as a cofactor.

It catalyses the reaction (2R)-2,3-dihydroxy-3-methylbutanoate + NADP(+) = (2S)-2-acetolactate + NADPH + H(+). The catalysed reaction is (2R,3R)-2,3-dihydroxy-3-methylpentanoate + NADP(+) = (S)-2-ethyl-2-hydroxy-3-oxobutanoate + NADPH + H(+). Its pathway is amino-acid biosynthesis; L-isoleucine biosynthesis; L-isoleucine from 2-oxobutanoate: step 2/4. It functions in the pathway amino-acid biosynthesis; L-valine biosynthesis; L-valine from pyruvate: step 2/4. Functionally, involved in the biosynthesis of branched-chain amino acids (BCAA). Catalyzes an alkyl-migration followed by a ketol-acid reduction of (S)-2-acetolactate (S2AL) to yield (R)-2,3-dihydroxy-isovalerate. In the isomerase reaction, S2AL is rearranged via a Mg-dependent methyl migration to produce 3-hydroxy-3-methyl-2-ketobutyrate (HMKB). In the reductase reaction, this 2-ketoacid undergoes a metal-dependent reduction by NADPH to yield (R)-2,3-dihydroxy-isovalerate. The protein is Ketol-acid reductoisomerase (NADP(+)) of Gamma-proteobacterium EBAC31A08.